The primary structure comprises 353 residues: MTKAQDRILVQEHLAHQAEPKPLSASEKADLEARIKVALKEKDAVLVAHYYTDPDIQRLAEETGGCVADSLEMARFGNQHPASTVVVAGVRFMGETAKILNPEKKVLMPTLEATCSLDVGCPADEFSEFCDQHPDRTVVVYANTSAAVKARADWVVTSSCAQAIVEHLDAKGEKILWAPDKHLGGYVQKTTGADVLLWDGSCIVHEEFKYRGLEDLKALYPDAAILVHPESPDAVVQMADVVGSTSQLIHAVQTLPNEEFIVATDNGIFYKMQQLAPNKTLIEAPTAGNGATCRSCAHCPWMAMNGLENLLHVLEHGDQEVHVDDELREDALRPLRRMLDFTANMNLKAAGNA.

The iminosuccinate site is built by His-49 and Ser-70. Cys-115 serves as a coordination point for [4Fe-4S] cluster. Residues 141–143 (YAN) and Ser-158 contribute to the iminosuccinate site. Cys-202 serves as a coordination point for [4Fe-4S] cluster. Iminosuccinate-binding positions include 228–230 (HPE) and Thr-245. A [4Fe-4S] cluster-binding site is contributed by Cys-299.

Belongs to the quinolinate synthase family. Type 1 subfamily. [4Fe-4S] cluster is required as a cofactor.

The protein resides in the cytoplasm. It carries out the reaction iminosuccinate + dihydroxyacetone phosphate = quinolinate + phosphate + 2 H2O + H(+). Its pathway is cofactor biosynthesis; NAD(+) biosynthesis; quinolinate from iminoaspartate: step 1/1. Functionally, catalyzes the condensation of iminoaspartate with dihydroxyacetone phosphate to form quinolinate. This is Quinolinate synthase from Marinobacter nauticus (strain ATCC 700491 / DSM 11845 / VT8) (Marinobacter aquaeolei).